Reading from the N-terminus, the 95-residue chain is Ribonuclease kappa (95 aa).

The next 2 membrane-spanning stretches (helical) occupy residues 12–32 (GLII…FFYI) and 68–88 (CWIA…QFYM).

The protein belongs to the RNase K family.

Its subcellular location is the membrane. Functionally, endoribonuclease. In terms of biological role, (Microbial infection) Required for the initial stages of clathrin-mediated endocytic uptake of a diverse set of flaviviruses, including dengue and West Nile. Not required for clathrin-mediated endocytosis and macropinocytosis. This Drosophila melanogaster (Fruit fly) protein is Ribonuclease kappa.